The primary structure comprises 173 residues: Signal peptidase complex catalytic subunit sec11 (173 aa).

Residues 1–15 (MLGIADMQPRQLAAQ) are Cytoplasmic-facing. A helical; Signal-anchor for type II membrane protein transmembrane segment spans residues 16–36 (ILNFALVLSTAFMMWKGLSVV). Residues 37–173 (SDSPSPIVVV…MGVMVVLQRE (137 aa)) lie on the Lumenal side of the membrane. Residues S50, H89, and D115 each act as charge relay system in the active site. The segment at 159–170 (VMLGLMGVMVVL) is C-terminal short (CTS) helix.

It belongs to the peptidase S26B family. Component of the signal peptidase complex (SPC) composed of a catalytic subunit SEC11 and three accessory subunits SPC1, SPC2 and SPC3. The complex induces a local thinning of the ER membrane which is used to measure the length of the signal peptide (SP) h-region of protein substrates. This ensures the selectivity of the complex towards h-regions shorter than 18-20 amino acids. SPC associates with the translocon complex.

It localises to the endoplasmic reticulum membrane. The enzyme catalyses Cleavage of hydrophobic, N-terminal signal or leader sequences from secreted and periplasmic proteins.. Catalytic component of the signal peptidase complex (SPC) which catalyzes the cleavage of N-terminal signal sequences from nascent proteins as they are translocated into the lumen of the endoplasmic reticulum. Specifically cleaves N-terminal signal peptides that contain a hydrophobic alpha-helix (h-region) shorter than 18-20 amino acids. The polypeptide is Signal peptidase complex catalytic subunit sec11 (sec11) (Pyrenophora tritici-repentis (strain Pt-1C-BFP) (Wheat tan spot fungus)).